A 402-amino-acid polypeptide reads, in one-letter code: E3 ubiquitin-protein ligase makorin-2 (402 aa).

3 C3H1-type zinc fingers span residues 2 to 29, 31 to 58, and 141 to 168; these read TTKQ…HDPS, SKPS…HVKL, and QDLP…HGDK. Residues 169–198 are makorin-type Cys-His; it reads CEVCGLQVLDPHNPEQRSMHEKMCLLAFEA. The RING-type zinc-finger motif lies at 214-268; it reads CSICMEVVVQKMNPSDRRFGILSSCCHVFCLACIRKWRCTRNFSNKIIKSCPECR. The segment at 297 to 326 adopts a C3H1-type 4 zinc-finger fold; the sequence is GVGKKPCKYFDQGRGSCPFGGKCLYLHALP.

The protein localises to the cytoplasm. It localises to the nucleus. It carries out the reaction S-ubiquitinyl-[E2 ubiquitin-conjugating enzyme]-L-cysteine + [acceptor protein]-L-lysine = [E2 ubiquitin-conjugating enzyme]-L-cysteine + N(6)-ubiquitinyl-[acceptor protein]-L-lysine.. It participates in protein modification; protein ubiquitination. Functionally, E3 ubiquitin ligase catalyzing the covalent attachment of ubiquitin moieties onto substrate proteins. Inhibits neurogenesis and axis formation during embryonic development by modulating the phosphatidylinositol 3-kinase (PI3K) pathway. Acts downstream of PI3K and akt1 to up-regulate gsk3b mRNA expression. This chain is E3 ubiquitin-protein ligase makorin-2, found in Takifugu rubripes (Japanese pufferfish).